Here is a 421-residue protein sequence, read N- to C-terminus: 4-hydroxy-3-methylbut-2-en-1-yl diphosphate synthase (flavodoxin) (421 aa).

Positions 300, 303, 346, and 353 each coordinate [4Fe-4S] cluster.

The protein belongs to the IspG family. [4Fe-4S] cluster serves as cofactor.

It catalyses the reaction (2E)-4-hydroxy-3-methylbut-2-enyl diphosphate + oxidized [flavodoxin] + H2O + 2 H(+) = 2-C-methyl-D-erythritol 2,4-cyclic diphosphate + reduced [flavodoxin]. The protein operates within isoprenoid biosynthesis; isopentenyl diphosphate biosynthesis via DXP pathway; isopentenyl diphosphate from 1-deoxy-D-xylulose 5-phosphate: step 5/6. Converts 2C-methyl-D-erythritol 2,4-cyclodiphosphate (ME-2,4cPP) into 1-hydroxy-2-methyl-2-(E)-butenyl 4-diphosphate. This chain is 4-hydroxy-3-methylbut-2-en-1-yl diphosphate synthase (flavodoxin), found in Laribacter hongkongensis (strain HLHK9).